A 526-amino-acid polypeptide reads, in one-letter code: MEELQGYLEKDRSRQQPFLYPLLFQEYIYALAHNHNRGLKGSLFYEPTEVFGYDSKSSLALAKRLIIRIYQQNDFLSVVNDSNKNRFVSHHRYNFCYSHFYSQMISEGFAILVEIPFSLRLVSYFEKKEIPKSHNLRSIHSIFPFLEDKLLHLNYVSDIRIPHPIHMEILVQILQCWIQDVPLLHFLRFFLHKYHNWNWNSFLITPKKSIYVFSKENKRLFRFLYNSYVSECEFLLVFLRKQSSYLRLTSFGLFLERRHFYVKIKRLQMQHLILIVVCRDYFQKALXXXXXXXXXXXRCQGKVVLAPKGTHLLMKKCKYNFVTLWQYYFHFWYQSYRIHINQLSNYSFYFLGYLSSLLKNSSTVRNQMLENSFLVDTVTNKLETLVPVIFLIGSLSKAQFCTVSGHPISKPIWADLPDSEIIERFGRMCRNLSHYHSGSSKKQGLYRIKYILRLSCARTLARKHKSTVRAFLRRLGSGLLEEFFTEEEQVLSLILPKTIPFTFYGSHKERIWYLDIIRINDLVNHS.

This sequence belongs to the intron maturase 2 family. MatK subfamily.

It is found in the plastid. The protein localises to the chloroplast. Functionally, usually encoded in the trnK tRNA gene intron. Probably assists in splicing its own and other chloroplast group II introns. This Iris setosa (Hiougi-ayame) protein is Maturase K.